The sequence spans 314 residues: Small ribosomal subunit biogenesis GTPase RsgA (314 aa).

The segment at 1 to 21 is disordered; sequence MKRAPTKQPAKPAARGGERAQ. The region spanning 85 to 246 is the CP-type G domain; sequence SDQFKSKLFA…LIDSPGFQEF (162 aa). GTP-binding positions include 134–137 and 188–196; these read NKID and GQSGMGKST. Zn(2+) is bound by residues C270, C275, H277, and C283.

It belongs to the TRAFAC class YlqF/YawG GTPase family. RsgA subfamily. Monomer. Associates with 30S ribosomal subunit, binds 16S rRNA. Zn(2+) is required as a cofactor.

The protein localises to the cytoplasm. Functionally, one of several proteins that assist in the late maturation steps of the functional core of the 30S ribosomal subunit. Helps release RbfA from mature subunits. May play a role in the assembly of ribosomal proteins into the subunit. Circularly permuted GTPase that catalyzes slow GTP hydrolysis, GTPase activity is stimulated by the 30S ribosomal subunit. The chain is Small ribosomal subunit biogenesis GTPase RsgA from Burkholderia mallei (strain ATCC 23344).